Consider the following 466-residue polypeptide: Cysteine--tRNA ligase (466 aa).

Residue Cys-28 participates in Zn(2+) binding. The 'HIGH' region signature appears at 30–40 (PTVYNFFHIGN). Residues Cys-208, His-233, and Glu-237 each contribute to the Zn(2+) site. Residues 265 to 269 (KMSKS) carry the 'KMSKS' region motif. Lys-268 contacts ATP.

It belongs to the class-I aminoacyl-tRNA synthetase family. As to quaternary structure, monomer. Requires Zn(2+) as cofactor.

It is found in the cytoplasm. The enzyme catalyses tRNA(Cys) + L-cysteine + ATP = L-cysteinyl-tRNA(Cys) + AMP + diphosphate. The sequence is that of Cysteine--tRNA ligase from Clostridium perfringens (strain SM101 / Type A).